A 345-amino-acid chain; its full sequence is tRNA pseudouridine synthase B (345 aa).

Asp-39 functions as the Nucleophile in the catalytic mechanism.

This sequence belongs to the pseudouridine synthase TruB family. Type 1 subfamily.

It catalyses the reaction uridine(55) in tRNA = pseudouridine(55) in tRNA. Functionally, responsible for synthesis of pseudouridine from uracil-55 in the psi GC loop of transfer RNAs. In Rickettsia africae (strain ESF-5), this protein is tRNA pseudouridine synthase B.